The sequence spans 208 residues: Uridine kinase (208 aa).

11–18 provides a ligand contact to ATP; sequence GGTGSGKS.

This sequence belongs to the uridine kinase family.

It is found in the cytoplasm. It catalyses the reaction uridine + ATP = UMP + ADP + H(+). It carries out the reaction cytidine + ATP = CMP + ADP + H(+). It functions in the pathway pyrimidine metabolism; CTP biosynthesis via salvage pathway; CTP from cytidine: step 1/3. It participates in pyrimidine metabolism; UMP biosynthesis via salvage pathway; UMP from uridine: step 1/1. The protein is Uridine kinase of Clostridium perfringens (strain SM101 / Type A).